The following is a 388-amino-acid chain: tRNA (guanine(26)-N(2))-dimethyltransferase (388 aa).

In terms of domain architecture, Trm1 methyltransferase spans 4-383 (RTIVEGTTKI…APIAEIKKII (380 aa)). S-adenosyl-L-methionine contacts are provided by arginine 41, arginine 78, aspartate 94, and alanine 123. 4 residues coordinate Zn(2+): cysteine 251, cysteine 254, cysteine 271, and cysteine 274.

The protein belongs to the class I-like SAM-binding methyltransferase superfamily. Trm1 family.

The catalysed reaction is guanosine(26) in tRNA + 2 S-adenosyl-L-methionine = N(2)-dimethylguanosine(26) in tRNA + 2 S-adenosyl-L-homocysteine + 2 H(+). Its function is as follows. Dimethylates a single guanine residue at position 26 of a number of tRNAs using S-adenosyl-L-methionine as donor of the methyl groups. The protein is tRNA (guanine(26)-N(2))-dimethyltransferase of Methanosarcina mazei (strain ATCC BAA-159 / DSM 3647 / Goe1 / Go1 / JCM 11833 / OCM 88) (Methanosarcina frisia).